The following is a 425-amino-acid chain: Serine--tRNA ligase (425 aa).

230-232 (TAE) provides a ligand contact to L-serine. ATP is bound at residue 261 to 263 (RSE). L-serine is bound at residue E284. 348–351 (EISS) is a binding site for ATP. L-serine is bound at residue S384.

The protein belongs to the class-II aminoacyl-tRNA synthetase family. Type-1 seryl-tRNA synthetase subfamily. As to quaternary structure, homodimer. The tRNA molecule binds across the dimer.

It is found in the cytoplasm. The enzyme catalyses tRNA(Ser) + L-serine + ATP = L-seryl-tRNA(Ser) + AMP + diphosphate + H(+). The catalysed reaction is tRNA(Sec) + L-serine + ATP = L-seryl-tRNA(Sec) + AMP + diphosphate + H(+). It functions in the pathway aminoacyl-tRNA biosynthesis; selenocysteinyl-tRNA(Sec) biosynthesis; L-seryl-tRNA(Sec) from L-serine and tRNA(Sec): step 1/1. Catalyzes the attachment of serine to tRNA(Ser). Is also able to aminoacylate tRNA(Sec) with serine, to form the misacylated tRNA L-seryl-tRNA(Sec), which will be further converted into selenocysteinyl-tRNA(Sec). This Streptococcus pyogenes serotype M1 protein is Serine--tRNA ligase.